Consider the following 80-residue polypeptide: MSCCGGNCGCGSGCKCGNGCGGCKMYPDMSFSEKTTTETLVLGVGAEKAHFEGGEMGVVGAEEGGCKCGDNCTCNPCTCK.

Belongs to the metallothionein superfamily. Type 15 family.

Its function is as follows. Metallothioneins have a high content of cysteine residues that bind various heavy metals. This chain is Metallothionein-like protein type 2 (MTI), found in Ricinus communis (Castor bean).